A 183-amino-acid chain; its full sequence is MLTMKDIIRDGHPTLRQKAAELELPLTKEEKETLIAMREFLVNSQDEEIAKRYGLRSGVGLAAPQINISKRMIAVLIPDDGSGKSYDYMLVNPKIVSHSVQEAYLPTGEGCLSVDDNVAGLVHRHNRITIKAKDIEGNDIQLRLKGYPAIVFQHEIDHLNGVMFYDHIDKNHPLQPHTDAVEV.

2 residues coordinate Fe cation: C111 and H154. E155 is a catalytic residue. H158 contacts Fe cation.

Fe(2+) serves as cofactor.

The catalysed reaction is N-terminal N-formyl-L-methionyl-[peptide] + H2O = N-terminal L-methionyl-[peptide] + formate. Functionally, removes the formyl group from the N-terminal Met of newly synthesized proteins. Requires at least a dipeptide for an efficient rate of reaction. N-terminal L-methionine is a prerequisite for activity but the enzyme has broad specificity at other positions. The sequence is that of Peptide deformylase from Staphylococcus aureus.